The chain runs to 545 residues: Chaperonin GroEL 2 (545 aa).

ATP-binding positions include 29-32, 86-90, glycine 414, and aspartate 499; these read TLGP and DGTTT.

Belongs to the chaperonin (HSP60) family. As to quaternary structure, forms a cylinder of 14 subunits composed of two heptameric rings stacked back-to-back. Interacts with the co-chaperonin GroES.

The protein resides in the cytoplasm. It catalyses the reaction ATP + H2O + a folded polypeptide = ADP + phosphate + an unfolded polypeptide.. Together with its co-chaperonin GroES, plays an essential role in assisting protein folding. The GroEL-GroES system forms a nano-cage that allows encapsulation of the non-native substrate proteins and provides a physical environment optimized to promote and accelerate protein folding. The polypeptide is Chaperonin GroEL 2 (Chloroflexus aurantiacus (strain ATCC 29366 / DSM 635 / J-10-fl)).